The following is a 68-amino-acid chain: Large ribosomal subunit protein uL29 (68 aa).

This sequence belongs to the universal ribosomal protein uL29 family.

The polypeptide is Large ribosomal subunit protein uL29 (Acidiphilium cryptum (strain JF-5)).